Consider the following 95-residue polypeptide: MPRSLKKGPFVEDHLLKKVDAQNDKKDKRVIKTWSRRSTIVPEMIGHTIAVYNGKQHVPVFVNEQMIGHKLGEFSPTRTYRGHGADKNAKGSKKK.

The segment at 73–95 (EFSPTRTYRGHGADKNAKGSKKK) is disordered.

It belongs to the universal ribosomal protein uS19 family.

Functionally, protein S19 forms a complex with S13 that binds strongly to the 16S ribosomal RNA. This Deinococcus radiodurans (strain ATCC 13939 / DSM 20539 / JCM 16871 / CCUG 27074 / LMG 4051 / NBRC 15346 / NCIMB 9279 / VKM B-1422 / R1) protein is Small ribosomal subunit protein uS19.